Consider the following 275-residue polypeptide: Ribosomal RNA small subunit methyltransferase A (275 aa).

Residues asparagine 21, leucine 23, glycine 48, glutamate 69, aspartate 94, and asparagine 115 each coordinate S-adenosyl-L-methionine.

It belongs to the class I-like SAM-binding methyltransferase superfamily. rRNA adenine N(6)-methyltransferase family. RsmA subfamily.

The protein localises to the cytoplasm. It catalyses the reaction adenosine(1518)/adenosine(1519) in 16S rRNA + 4 S-adenosyl-L-methionine = N(6)-dimethyladenosine(1518)/N(6)-dimethyladenosine(1519) in 16S rRNA + 4 S-adenosyl-L-homocysteine + 4 H(+). In terms of biological role, specifically dimethylates two adjacent adenosines (A1518 and A1519) in the loop of a conserved hairpin near the 3'-end of 16S rRNA in the 30S particle. May play a critical role in biogenesis of 30S subunits. This is Ribosomal RNA small subunit methyltransferase A from Clostridium botulinum (strain Langeland / NCTC 10281 / Type F).